Consider the following 64-residue polypeptide: Putative antitoxin VapB1 (64 aa).

Possibly the antitoxin component of a type II toxin-antitoxin (TA) system. Its cognate toxin is VapC1 (Potential). The sequence is that of Putative antitoxin VapB1 (vapB1) from Methanocaldococcus jannaschii (strain ATCC 43067 / DSM 2661 / JAL-1 / JCM 10045 / NBRC 100440) (Methanococcus jannaschii).